We begin with the raw amino-acid sequence, 510 residues long: F-box only protein 15 (510 aa).

One can recognise an F-box domain in the interval 77–117; sequence MPSEILLKIFSYLDAVSLLCTGCVSRRFYHLANDNFIWIGI.

In terms of assembly, directly interacts with SKP1 and CUL1.

In terms of biological role, substrate-recognition component of the SCF (SKP1-CUL1-F-box protein)-type E3 ubiquitin ligase complex. This chain is F-box only protein 15 (FBXO15), found in Homo sapiens (Human).